A 138-amino-acid chain; its full sequence is Vesicle transport protein GOT1B (138 aa).

M1 carries the N-acetylmethionine modification. Residues 1 to 9 (MISLTDTQK) are Cytoplasmic-facing. Residues 10-30 (IGMGLTGFGVFFLFFGMILFF) form a helical membrane-spanning segment. Residues 31–32 (DK) lie on the Lumenal side of the membrane. The chain crosses the membrane as a helical span at residues 33-53 (ALLAIGNVLFVAGLAFVIGLE). At 54–68 (RTFRFFFQRHKVKAT) the chain is on the cytoplasmic side. Position 90 (E90) is a topological domain, lumenal. A helical membrane pass occupies residues 91–109 (IYGFFLLFRGFFPVVVGFI). At 110–138 (RRVPVLGSLLNLPGIRSFVDKVGESNNMV) the chain is on the cytoplasmic side.

This sequence belongs to the GOT1 family.

The protein resides in the golgi apparatus membrane. Functionally, may be involved in fusion of ER-derived transport vesicles with the Golgi complex. This is Vesicle transport protein GOT1B (Golt1b) from Mus musculus (Mouse).